A 72-amino-acid chain; its full sequence is Translation initiation factor IF-1 (72 aa).

The region spanning 1-72 (MSKQDVIELE…SRGRITWRKK (72 aa)) is the S1-like domain.

Belongs to the IF-1 family. Component of the 30S ribosomal translation pre-initiation complex which assembles on the 30S ribosome in the order IF-2 and IF-3, IF-1 and N-formylmethionyl-tRNA(fMet); mRNA recruitment can occur at any time during PIC assembly.

It is found in the cytoplasm. One of the essential components for the initiation of protein synthesis. Stabilizes the binding of IF-2 and IF-3 on the 30S subunit to which N-formylmethionyl-tRNA(fMet) subsequently binds. Helps modulate mRNA selection, yielding the 30S pre-initiation complex (PIC). Upon addition of the 50S ribosomal subunit IF-1, IF-2 and IF-3 are released leaving the mature 70S translation initiation complex. The chain is Translation initiation factor IF-1 from Alkaliphilus oremlandii (strain OhILAs) (Clostridium oremlandii (strain OhILAs)).